Reading from the N-terminus, the 274-residue chain is Formamidopyrimidine-DNA glycosylase (274 aa).

The Schiff-base intermediate with DNA role is filled by proline 2. Residue glutamate 3 is the Proton donor of the active site. Residue lysine 59 is the Proton donor; for beta-elimination activity of the active site. DNA contacts are provided by histidine 93, arginine 112, and arginine 155. Residues glutamine 240–valine 274 form an FPG-type zinc finger. Arginine 264 serves as the catalytic Proton donor; for delta-elimination activity.

This sequence belongs to the FPG family. Monomer. Requires Zn(2+) as cofactor.

The catalysed reaction is Hydrolysis of DNA containing ring-opened 7-methylguanine residues, releasing 2,6-diamino-4-hydroxy-5-(N-methyl)formamidopyrimidine.. The enzyme catalyses 2'-deoxyribonucleotide-(2'-deoxyribose 5'-phosphate)-2'-deoxyribonucleotide-DNA = a 3'-end 2'-deoxyribonucleotide-(2,3-dehydro-2,3-deoxyribose 5'-phosphate)-DNA + a 5'-end 5'-phospho-2'-deoxyribonucleoside-DNA + H(+). Its function is as follows. Involved in base excision repair of DNA damaged by oxidation or by mutagenic agents. Acts as a DNA glycosylase that recognizes and removes damaged bases. Has a preference for oxidized purines, such as 7,8-dihydro-8-oxoguanine (8-oxoG). Has AP (apurinic/apyrimidinic) lyase activity and introduces nicks in the DNA strand. Cleaves the DNA backbone by beta-delta elimination to generate a single-strand break at the site of the removed base with both 3'- and 5'-phosphates. The polypeptide is Formamidopyrimidine-DNA glycosylase (Moorella thermoacetica (strain ATCC 39073 / JCM 9320)).